The chain runs to 510 residues: tRNA(Ile)-lysidine synthase (510 aa).

Position 32 to 37 (32 to 37 (SGGLDS)) interacts with ATP.

It belongs to the tRNA(Ile)-lysidine synthase family.

The protein resides in the cytoplasm. It catalyses the reaction cytidine(34) in tRNA(Ile2) + L-lysine + ATP = lysidine(34) in tRNA(Ile2) + AMP + diphosphate + H(+). In terms of biological role, ligates lysine onto the cytidine present at position 34 of the AUA codon-specific tRNA(Ile) that contains the anticodon CAU, in an ATP-dependent manner. Cytidine is converted to lysidine, thus changing the amino acid specificity of the tRNA from methionine to isoleucine. The chain is tRNA(Ile)-lysidine synthase from Blochmanniella pennsylvanica (strain BPEN).